The primary structure comprises 489 residues: L-arabinose isomerase (489 aa).

The Mn(2+) site is built by glutamate 300, glutamate 325, histidine 342, and histidine 441.

Belongs to the arabinose isomerase family. The cofactor is Mn(2+).

The enzyme catalyses beta-L-arabinopyranose = L-ribulose. Its pathway is carbohydrate degradation; L-arabinose degradation via L-ribulose; D-xylulose 5-phosphate from L-arabinose (bacterial route): step 1/3. Its function is as follows. Catalyzes the conversion of L-arabinose to L-ribulose. The protein is L-arabinose isomerase of Clostridium beijerinckii (strain ATCC 51743 / NCIMB 8052) (Clostridium acetobutylicum).